Here is a 330-residue protein sequence, read N- to C-terminus: 2-alkyl-3-oxoalkanoate reductase (330 aa).

Tyr139 acts as the Proton acceptor in catalysis. Lys143 contacts NADP(+).

It belongs to the 3-beta-HSD family. Homodimer.

The enzyme catalyses a (2R,3S)-2-alkyl-3-hydroxyalkanoate + NADP(+) = an (R)-2-alkyl-3-oxoalkanoate + NADPH + H(+). In terms of biological role, involved in olefin biosynthesis. Catalyzes the reversible stereospecific NADPH-dependent reduction of 2-alkyl-3-oxoalkanoic acids to 2-alkyl-3-hydroxyalkanoic acids. In the oxidative direction, syn-2-decyl-3-hydroxytetradecanoic acid is the preferred substrate. In the reductive direction, (2R/S)-2-hexyl-3-ketodecanoic acid is accepted as substrate. The protein is 2-alkyl-3-oxoalkanoate reductase of Stenotrophomonas maltophilia (strain K279a).